The primary structure comprises 226 residues: Phosphoribosylformylglycinamidine synthase subunit PurQ (226 aa).

Residues 3–225 (FAVIVFPGSN…VKWGARHVTY (223 aa)) enclose the Glutamine amidotransferase type-1 domain. The active-site Nucleophile is cysteine 86. Active-site residues include histidine 194 and glutamate 196.

Part of the FGAM synthase complex composed of 1 PurL, 1 PurQ and 2 PurS subunits.

The protein localises to the cytoplasm. It catalyses the reaction N(2)-formyl-N(1)-(5-phospho-beta-D-ribosyl)glycinamide + L-glutamine + ATP + H2O = 2-formamido-N(1)-(5-O-phospho-beta-D-ribosyl)acetamidine + L-glutamate + ADP + phosphate + H(+). It carries out the reaction L-glutamine + H2O = L-glutamate + NH4(+). It functions in the pathway purine metabolism; IMP biosynthesis via de novo pathway; 5-amino-1-(5-phospho-D-ribosyl)imidazole from N(2)-formyl-N(1)-(5-phospho-D-ribosyl)glycinamide: step 1/2. In terms of biological role, part of the phosphoribosylformylglycinamidine synthase complex involved in the purines biosynthetic pathway. Catalyzes the ATP-dependent conversion of formylglycinamide ribonucleotide (FGAR) and glutamine to yield formylglycinamidine ribonucleotide (FGAM) and glutamate. The FGAM synthase complex is composed of three subunits. PurQ produces an ammonia molecule by converting glutamine to glutamate. PurL transfers the ammonia molecule to FGAR to form FGAM in an ATP-dependent manner. PurS interacts with PurQ and PurL and is thought to assist in the transfer of the ammonia molecule from PurQ to PurL. The polypeptide is Phosphoribosylformylglycinamidine synthase subunit PurQ (Exiguobacterium sp. (strain ATCC BAA-1283 / AT1b)).